Consider the following 303-residue polypeptide: N-acetyl-D-glucosamine kinase (303 aa).

ATP-binding positions include 4–11 (GFDIGGTK) and 133–140 (GVGGGLIF). Residues His157, Cys177, Cys179, and Cys184 each coordinate Zn(2+).

This sequence belongs to the ROK (NagC/XylR) family. NagK subfamily.

It catalyses the reaction N-acetyl-D-glucosamine + ATP = N-acetyl-D-glucosamine 6-phosphate + ADP + H(+). The protein operates within cell wall biogenesis; peptidoglycan recycling. Catalyzes the phosphorylation of N-acetyl-D-glucosamine (GlcNAc) derived from cell-wall degradation, yielding GlcNAc-6-P. The sequence is that of N-acetyl-D-glucosamine kinase from Escherichia coli O7:K1 (strain IAI39 / ExPEC).